The chain runs to 290 residues: 4-hydroxybenzoate octaprenyltransferase (290 aa).

Helical transmembrane passes span 23–43 (IGAL…TPGV), 46–66 (LWIL…GCVV), 99–119 (LFVV…TMTI), 141–161 (LPQV…FAAV), 163–183 (ESVP…AVAY), 213–233 (LIIG…GELN), 234–254 (GLGW…VYQQ), and 268–288 (AFMN…MSYW).

The protein belongs to the UbiA prenyltransferase family. It depends on Mg(2+) as a cofactor.

It is found in the cell inner membrane. It catalyses the reaction all-trans-octaprenyl diphosphate + 4-hydroxybenzoate = 4-hydroxy-3-(all-trans-octaprenyl)benzoate + diphosphate. The protein operates within cofactor biosynthesis; ubiquinone biosynthesis. Its function is as follows. Catalyzes the prenylation of para-hydroxybenzoate (PHB) with an all-trans polyprenyl group. Mediates the second step in the final reaction sequence of ubiquinone-8 (UQ-8) biosynthesis, which is the condensation of the polyisoprenoid side chain with PHB, generating the first membrane-bound Q intermediate 3-octaprenyl-4-hydroxybenzoate. This Escherichia coli (strain SE11) protein is 4-hydroxybenzoate octaprenyltransferase.